Consider the following 206-residue polypeptide: Small ribosomal subunit protein uS4 (206 aa).

Positions 96-158 (SRLDNVVYRM…AKGQLRIKGA (63 aa)) constitute an S4 RNA-binding domain.

Belongs to the universal ribosomal protein uS4 family. In terms of assembly, part of the 30S ribosomal subunit. Contacts protein S5. The interaction surface between S4 and S5 is involved in control of translational fidelity.

Its function is as follows. One of the primary rRNA binding proteins, it binds directly to 16S rRNA where it nucleates assembly of the body of the 30S subunit. In terms of biological role, with S5 and S12 plays an important role in translational accuracy. This is Small ribosomal subunit protein uS4 from Coxiella burnetii (strain CbuK_Q154) (Coxiella burnetii (strain Q154)).